A 400-amino-acid polypeptide reads, in one-letter code: MRKLTILGATGSIGSSTLSVAQQNSDQFEIVALGAGTNVDKMLELCLEWKPKYVAMATQPAADALKELLSAHAINAEVFSGEDGLCHIAQLDEVDTVMAAIVGAAGLLPTMSAVKASKRILLANKEALVMSGQLFIDAVEKYGAELLPVDSEHNAIFQCLPQSIQTNLGRCDLEEHGVSSILLTGSGGPFRYTDVSELEAVTPEMAIAHPNWSMGPKISVDSATMMNKGLEYIEARWLFNASKEQLKVVIHPQSVIHSMVQYKDGSVLAQMGLPDMRTPIACTMSYPKRVNAGVEPLDFTKVGEFTFIAPDFSRYPCLKLAIDACYLGQHATTGLNAANEQAVAAFLANKIKFTDIARINEAVLHKVCANFQNLELDSLESLIDLDRMARRYADEAINKV.

The NADPH site is built by threonine 10, glycine 11, serine 12, isoleucine 13, glycine 36, asparagine 38, and asparagine 124. Position 125 (lysine 125) interacts with 1-deoxy-D-xylulose 5-phosphate. Residue glutamate 126 coordinates NADPH. Position 150 (aspartate 150) interacts with Mn(2+). 1-deoxy-D-xylulose 5-phosphate-binding residues include serine 151, glutamate 152, serine 186, and histidine 209. A Mn(2+)-binding site is contributed by glutamate 152. Position 215 (glycine 215) interacts with NADPH. Residues serine 222, asparagine 227, lysine 228, and glutamate 231 each contribute to the 1-deoxy-D-xylulose 5-phosphate site. Glutamate 231 contributes to the Mn(2+) binding site.

The protein belongs to the DXR family. It depends on Mg(2+) as a cofactor. Requires Mn(2+) as cofactor.

The enzyme catalyses 2-C-methyl-D-erythritol 4-phosphate + NADP(+) = 1-deoxy-D-xylulose 5-phosphate + NADPH + H(+). It functions in the pathway isoprenoid biosynthesis; isopentenyl diphosphate biosynthesis via DXP pathway; isopentenyl diphosphate from 1-deoxy-D-xylulose 5-phosphate: step 1/6. Catalyzes the NADPH-dependent rearrangement and reduction of 1-deoxy-D-xylulose-5-phosphate (DXP) to 2-C-methyl-D-erythritol 4-phosphate (MEP). This chain is 1-deoxy-D-xylulose 5-phosphate reductoisomerase, found in Aliivibrio fischeri (strain MJ11) (Vibrio fischeri).